A 190-amino-acid polypeptide reads, in one-letter code: Isopentenyl-diphosphate Delta-isomerase (190 aa).

Mn(2+) contacts are provided by histidine 27 and histidine 34. The region spanning 32–166 (ALHLAFSCHV…PWAFSPWLTL (135 aa)) is the Nudix hydrolase domain. The active site involves cysteine 69. Histidine 71 contributes to the Mn(2+) binding site. A Mg(2+)-binding site is contributed by glutamate 89. Glutamate 116 and glutamate 118 together coordinate Mn(2+). Glutamate 118 is an active-site residue.

This sequence belongs to the IPP isomerase type 1 family. It depends on Mg(2+) as a cofactor. Requires Mn(2+) as cofactor.

It is found in the cytoplasm. The enzyme catalyses isopentenyl diphosphate = dimethylallyl diphosphate. Its pathway is isoprenoid biosynthesis; dimethylallyl diphosphate biosynthesis; dimethylallyl diphosphate from isopentenyl diphosphate: step 1/1. Functionally, catalyzes the 1,3-allylic rearrangement of the homoallylic substrate isopentenyl (IPP) to its highly electrophilic allylic isomer, dimethylallyl diphosphate (DMAPP). The polypeptide is Isopentenyl-diphosphate Delta-isomerase (Clavibacter sepedonicus (Clavibacter michiganensis subsp. sepedonicus)).